We begin with the raw amino-acid sequence, 139 residues long: 6,7-dimethyl-8-ribityllumazine synthase (139 aa).

5-amino-6-(D-ribitylamino)uracil is bound by residues Phe-11, 42 to 44 (ALE), and 66 to 68 (VVI). 71–72 (ET) contributes to the (2S)-2-hydroxy-3-oxobutyl phosphate binding site. His-74 acts as the Proton donor in catalysis. Asn-98 serves as a coordination point for 5-amino-6-(D-ribitylamino)uracil. Arg-112 is a binding site for (2S)-2-hydroxy-3-oxobutyl phosphate.

It belongs to the DMRL synthase family.

The catalysed reaction is (2S)-2-hydroxy-3-oxobutyl phosphate + 5-amino-6-(D-ribitylamino)uracil = 6,7-dimethyl-8-(1-D-ribityl)lumazine + phosphate + 2 H2O + H(+). It functions in the pathway cofactor biosynthesis; riboflavin biosynthesis; riboflavin from 2-hydroxy-3-oxobutyl phosphate and 5-amino-6-(D-ribitylamino)uracil: step 1/2. Catalyzes the formation of 6,7-dimethyl-8-ribityllumazine by condensation of 5-amino-6-(D-ribitylamino)uracil with 3,4-dihydroxy-2-butanone 4-phosphate. This is the penultimate step in the biosynthesis of riboflavin. This chain is 6,7-dimethyl-8-ribityllumazine synthase, found in Novosphingobium aromaticivorans (strain ATCC 700278 / DSM 12444 / CCUG 56034 / CIP 105152 / NBRC 16084 / F199).